Consider the following 571-residue polypeptide: Cytochrome P450 monooxygenase g430 (571 aa).

A helical transmembrane segment spans residues 8–28 (GALIWVVTSYILYAIISNFII). Cys471 contributes to the heme binding site. Residues 552–571 (CPLPAEAKLPKSRKPIGTAS) are disordered.

The protein belongs to the cytochrome P450 family. The cofactor is heme.

It is found in the membrane. It functions in the pathway mycotoxin biosynthesis. Cytochrome P450 monooxygenase; part of the gene cluster that mediates the biosynthesis of 1233A, a natural compound known as an inhibitor of HMG-CoA synthase in the mevalonate pathway and with antibacterial and antifungal activities. The highly reducing polyketide synthase g433 is responsible for the 1233A backbone biosynthesis and the cytochrome P450 monooxygenase g430 catalyzes oxidation of the backbone. The sequence is that of Cytochrome P450 monooxygenase g430 from Fusarium sp.